The chain runs to 295 residues: Bifunctional protein FolD (295 aa).

NADP(+)-binding positions include 166-168, Ser195, and Ile236; that span reads GRS.

This sequence belongs to the tetrahydrofolate dehydrogenase/cyclohydrolase family. As to quaternary structure, homodimer.

It carries out the reaction (6R)-5,10-methylene-5,6,7,8-tetrahydrofolate + NADP(+) = (6R)-5,10-methenyltetrahydrofolate + NADPH. The catalysed reaction is (6R)-5,10-methenyltetrahydrofolate + H2O = (6R)-10-formyltetrahydrofolate + H(+). Its pathway is one-carbon metabolism; tetrahydrofolate interconversion. In terms of biological role, catalyzes the oxidation of 5,10-methylenetetrahydrofolate to 5,10-methenyltetrahydrofolate and then the hydrolysis of 5,10-methenyltetrahydrofolate to 10-formyltetrahydrofolate. This Chlorobium phaeovibrioides (strain DSM 265 / 1930) (Prosthecochloris vibrioformis (strain DSM 265)) protein is Bifunctional protein FolD.